The following is a 645-amino-acid chain: DNA mismatch repair protein MutL (645 aa).

The protein belongs to the DNA mismatch repair MutL/HexB family.

Its function is as follows. This protein is involved in the repair of mismatches in DNA. It is required for dam-dependent methyl-directed DNA mismatch repair. May act as a 'molecular matchmaker', a protein that promotes the formation of a stable complex between two or more DNA-binding proteins in an ATP-dependent manner without itself being part of a final effector complex. In Geobacillus thermodenitrificans (strain NG80-2), this protein is DNA mismatch repair protein MutL.